A 435-amino-acid polypeptide reads, in one-letter code: Cyclin-J-like protein (435 aa).

A Cyclin N-terminal domain is found at 14-191 (DVHCTLREKE…LLEAFSWNLC (178 aa)). Residues 120 to 142 (SSNSPASAPHPPPTPPQVAETTG) form a disordered region.

This sequence belongs to the cyclin family. Cyclin J subfamily.

This Homo sapiens (Human) protein is Cyclin-J-like protein (CCNJL).